A 621-amino-acid polypeptide reads, in one-letter code: Alpha-actinin-like protein 1 (621 aa).

Calponin-homology (CH) domains lie at 8–114 and 123–230; these read SVQN…LRFT and LTAK…HAFS. Positions 86-110 are actin-binding; that stretch reads LTNIGPADIVDGNLKLILGLIWTLI. 3 EF-hand domains span residues 388–419, 487–549, and 550–618; these read LSTI…LGPL, DGIT…EIVM, and EELE…AEDK.

It belongs to the alpha-actinin family.

The protein localises to the cytoplasm. The protein resides in the cytoskeleton. Its function is as follows. Binds to actin and is involved in actin-ring formation and organization. Plays a role in cytokinesis and is involved in septation. The sequence is that of Alpha-actinin-like protein 1 (ain1) from Schizosaccharomyces pombe (strain 972 / ATCC 24843) (Fission yeast).